The sequence spans 551 residues: Tropolone cluster transcription factor tropK (551 aa).

The segment at 1-21 (MSVAIKMSTNTVGGQSTRQPP) is disordered. The span at 7-20 (MSTNTVGGQSTRQP) shows a compositional bias: polar residues. Residues 25–52 (CLHCRNKKMKCDALQPRCKNCFNAGVEC) constitute a DNA-binding region (zn(2)-C6 fungal-type).

The protein localises to the nucleus. In terms of biological role, transcription factor that regulates the expression of the gene cluster that mediates the biosynthesis tropolone class of fungal maleic anhydrides, including stipitaldehydic, stipitatonic and stipitatic acids. The protein is Tropolone cluster transcription factor tropK of Talaromyces stipitatus (strain ATCC 10500 / CBS 375.48 / QM 6759 / NRRL 1006) (Penicillium stipitatum).